The primary structure comprises 529 residues: Glucose-6-phosphate isomerase (529 aa).

The active-site Proton donor is the E322. Active-site residues include H351 and K455.

Belongs to the GPI family.

Its subcellular location is the cytoplasm. It carries out the reaction alpha-D-glucose 6-phosphate = beta-D-fructose 6-phosphate. The protein operates within carbohydrate biosynthesis; gluconeogenesis. It functions in the pathway carbohydrate degradation; glycolysis; D-glyceraldehyde 3-phosphate and glycerone phosphate from D-glucose: step 2/4. Functionally, catalyzes the reversible isomerization of glucose-6-phosphate to fructose-6-phosphate. This chain is Glucose-6-phosphate isomerase, found in Acaryochloris marina (strain MBIC 11017).